A 346-amino-acid polypeptide reads, in one-letter code: Phosphate acyltransferase (346 aa).

Belongs to the PlsX family. In terms of assembly, homodimer. Probably interacts with PlsY.

It localises to the cytoplasm. It carries out the reaction a fatty acyl-[ACP] + phosphate = an acyl phosphate + holo-[ACP]. It participates in lipid metabolism; phospholipid metabolism. Functionally, catalyzes the reversible formation of acyl-phosphate (acyl-PO(4)) from acyl-[acyl-carrier-protein] (acyl-ACP). This enzyme utilizes acyl-ACP as fatty acyl donor, but not acyl-CoA. The polypeptide is Phosphate acyltransferase (Deinococcus geothermalis (strain DSM 11300 / CIP 105573 / AG-3a)).